The primary structure comprises 654 residues: Carboxypeptidase Z (654 aa).

The first 20 residues, 1-20, serve as a signal peptide directing secretion; that stretch reads MPTMPLLLAALAALAVLALA. Positions 43–165 constitute an FZ domain; sequence THSATCVDLH…APEEEGCYDP (123 aa). Disulfide bonds link cysteine 48–cysteine 114, cysteine 56–cysteine 107, cysteine 98–cysteine 134, cysteine 123–cysteine 162, and cysteine 127–cysteine 151. Asparagine 62 carries an N-linked (GlcNAc...) asparagine glycan. In terms of domain architecture, Peptidase M14 spans 191–507; the sequence is AHHSYAQMVR…EPLLNFLEMV (317 aa). Zn(2+) contacts are provided by histidine 253 and glutamate 256. Asparagine 286 is a glycosylation site (N-linked (GlcNAc...) asparagine). Histidine 385 lines the Zn(2+) pocket. The active-site Proton donor/acceptor is the glutamate 477. The tract at residues 596–630 is disordered; that stretch reads FLPGPSRALPRFQDPQREPTQMDFEPPRARRQPAS.

Belongs to the peptidase M14 family. Requires Zn(2+) as cofactor.

It localises to the secreted. The protein resides in the extracellular space. The protein localises to the extracellular matrix. With respect to regulation, inhibited by 2-mercaptomethyl-3-guanidinoethylthiopropanoic acid (MGTA) and guanidinoethylmercaptosuccinic acid (GEMSA). Inhibited by chelating agents such as EDTA and EGTA. Its function is as follows. Cleaves substrates with C-terminal arginine residues. Probably modulates the Wnt signaling pathway, by cleaving some undefined protein. May play a role in cleavage during prohormone processing. The chain is Carboxypeptidase Z (Cpz) from Mus musculus (Mouse).